We begin with the raw amino-acid sequence, 166 residues long: Protein-export protein SecB (166 aa).

This sequence belongs to the SecB family. As to quaternary structure, homotetramer, a dimer of dimers. One homotetramer interacts with 1 SecA dimer.

The protein resides in the cytoplasm. In terms of biological role, one of the proteins required for the normal export of preproteins out of the cell cytoplasm. It is a molecular chaperone that binds to a subset of precursor proteins, maintaining them in a translocation-competent state. It also specifically binds to its receptor SecA. The protein is Protein-export protein SecB of Actinobacillus pleuropneumoniae serotype 5b (strain L20).